The sequence spans 82 residues: UPF0335 protein pRhico085 (82 aa).

Belongs to the UPF0335 family.

The polypeptide is UPF0335 protein pRhico085 (Azospirillum brasilense).